The chain runs to 133 residues: ATP synthase epsilon chain (133 aa).

This sequence belongs to the ATPase epsilon chain family. In terms of assembly, F-type ATPases have 2 components, CF(1) - the catalytic core - and CF(0) - the membrane proton channel. CF(1) has five subunits: alpha(3), beta(3), gamma(1), delta(1), epsilon(1). CF(0) has three main subunits: a, b and c.

The protein localises to the cell membrane. Its function is as follows. Produces ATP from ADP in the presence of a proton gradient across the membrane. The protein is ATP synthase epsilon chain of Clostridium botulinum (strain 657 / Type Ba4).